The following is a 158-amino-acid chain: NAD(P)H-quinone oxidoreductase subunit J, chloroplastic (158 aa).

It belongs to the complex I 30 kDa subunit family. As to quaternary structure, NDH is composed of at least 16 different subunits, 5 of which are encoded in the nucleus.

Its subcellular location is the plastid. It localises to the chloroplast thylakoid membrane. It carries out the reaction a plastoquinone + NADH + (n+1) H(+)(in) = a plastoquinol + NAD(+) + n H(+)(out). It catalyses the reaction a plastoquinone + NADPH + (n+1) H(+)(in) = a plastoquinol + NADP(+) + n H(+)(out). NDH shuttles electrons from NAD(P)H:plastoquinone, via FMN and iron-sulfur (Fe-S) centers, to quinones in the photosynthetic chain and possibly in a chloroplast respiratory chain. The immediate electron acceptor for the enzyme in this species is believed to be plastoquinone. Couples the redox reaction to proton translocation, and thus conserves the redox energy in a proton gradient. In Cicer arietinum (Chickpea), this protein is NAD(P)H-quinone oxidoreductase subunit J, chloroplastic.